The following is a 257-amino-acid chain: Ribonuclease PH (257 aa).

Residues Arg86 and 124 to 126 contribute to the phosphate site; that span reads GTR.

The protein belongs to the RNase PH family. Homohexameric ring arranged as a trimer of dimers.

It carries out the reaction tRNA(n+1) + phosphate = tRNA(n) + a ribonucleoside 5'-diphosphate. Its function is as follows. Phosphorolytic 3'-5' exoribonuclease that plays an important role in tRNA 3'-end maturation. Removes nucleotide residues following the 3'-CCA terminus of tRNAs; can also add nucleotides to the ends of RNA molecules by using nucleoside diphosphates as substrates, but this may not be physiologically important. Probably plays a role in initiation of 16S rRNA degradation (leading to ribosome degradation) during starvation. In Halalkalibacterium halodurans (strain ATCC BAA-125 / DSM 18197 / FERM 7344 / JCM 9153 / C-125) (Bacillus halodurans), this protein is Ribonuclease PH.